Reading from the N-terminus, the 80-residue chain is Small ribosomal subunit protein bS18 (80 aa).

This sequence belongs to the bacterial ribosomal protein bS18 family. As to quaternary structure, part of the 30S ribosomal subunit. Forms a tight heterodimer with protein bS6.

Binds as a heterodimer with protein bS6 to the central domain of the 16S rRNA, where it helps stabilize the platform of the 30S subunit. This Clostridium botulinum (strain 657 / Type Ba4) protein is Small ribosomal subunit protein bS18.